We begin with the raw amino-acid sequence, 161 residues long: Anthrone oxygenase tpcL (161 aa).

The N-linked (GlcNAc...) asparagine glycan is linked to Asn4. A run of 4 helical transmembrane segments spans residues 15-35, 56-74, 87-107, and 136-155; these read VITG…DIPV, IGHK…LYGY, LPHI…WLVM, and WAQL…VLGL.

Belongs to the anthrone oxygenase family. In terms of tissue distribution, specifically expressed in conidia.

The protein localises to the membrane. It carries out the reaction emodin anthrone + O2 = emodin + H2O + H(+). The protein operates within secondary metabolite biosynthesis. In terms of biological role, anthrone oxygenase; part of the gene cluster that mediates the biosynthesis of trypacidin, a mycotoxin with antiprotozoal activity and that plays a role in the infection process. The pathway begins with the synthesis of atrochrysone thioester by the polyketide synthase (PKS) tpcC. The atrochrysone carboxyl ACP thioesterase tpcB then breaks the thioester bond and releases the atrochrysone carboxylic acid from tpcC. The decarboxylase tpcK converts atrochrysone carboxylic acid to atrochrysone which is further reduced into emodin anthrone. The next step is performed by the emodin anthrone oxygenase tpcL that catalyzes the oxidation of emodinanthrone to emodin. Emodin O-methyltransferase encoded by tpcA catalyzes methylation of the 8-hydroxy group of emodin to form questin. Ring cleavage of questin by questin oxidase tpcI leads to desmethylsulochrin via several intermediates including questin epoxide. Another methylation step catalyzed by tpcM leads to the formation of sulochrin which is further converted to monomethylsulfochrin by tpcH. Finally, the tpcJ catalyzes the conversion of monomethylsulfochrin to trypacidin. Trypacidin is toxic for human pulmonary and bronchial epithelial cells by initiating the intracellular formation of nitric oxide (NO) and hydrogen peroxide (H(2)O(2)), thus triggering host necrotic cell death. The trypacidin pathway is also able to produce endocrocin via a distinct route from the endocrocin Enc pathway. The polypeptide is Anthrone oxygenase tpcL (Aspergillus fumigatus (strain ATCC MYA-4609 / CBS 101355 / FGSC A1100 / Af293) (Neosartorya fumigata)).